A 257-amino-acid polypeptide reads, in one-letter code: Acetylglutamate kinase (257 aa).

Substrate contacts are provided by residues 43-44, R65, and N157; that span reads GG. Residues 180 to 185 and 208 to 210 each bind ATP; these read DVSGIL and IIT.

Belongs to the acetylglutamate kinase family. ArgB subfamily. As to quaternary structure, homodimer.

The protein localises to the cytoplasm. It catalyses the reaction N-acetyl-L-glutamate + ATP = N-acetyl-L-glutamyl 5-phosphate + ADP. It participates in amino-acid biosynthesis; L-arginine biosynthesis; N(2)-acetyl-L-ornithine from L-glutamate: step 2/4. Catalyzes the ATP-dependent phosphorylation of N-acetyl-L-glutamate. This is Acetylglutamate kinase from Enterobacter sp. (strain 638).